Reading from the N-terminus, the 463-residue chain is tRNA dimethylallyltransferase 9 (463 aa).

ATP is bound at residue 57–64 (GPTGAGKS). 59–64 (TGAGKS) contributes to the substrate binding site. The segment at 82–85 (DSVQ) is interaction with substrate tRNA.

This sequence belongs to the IPP transferase family. Requires Mg(2+) as cofactor. As to expression, expressed ubiquitously, with highest expression in proliferating tissues.

It is found in the cytoplasm. It carries out the reaction adenosine(37) in tRNA + dimethylallyl diphosphate = N(6)-dimethylallyladenosine(37) in tRNA + diphosphate. Its function is as follows. Catalyzes the transfer of a dimethylallyl group onto the adenine at position 37 in tRNAs that read codons beginning with uridine, leading to the formation of N6-(dimethylallyl)adenosine (i(6)A). Involved in the cis-type cytokinin biosynthesis. This is tRNA dimethylallyltransferase 9 (IPT9) from Arabidopsis thaliana (Mouse-ear cress).